We begin with the raw amino-acid sequence, 715 residues long: SEC14-like protein 1 (715 aa).

Residues 1 to 510 (MVQKYQSPVR…VPKSLYRTAE (510 aa)) form a required for interaction and inhibitory function toward RIGI region. The PRELI/MSF1 domain maps to 3 to 175 (QKYQSPVRVY…YLRQLEEEGI (173 aa)). At T234 the chain carries Phosphothreonine. The CRAL-TRIO domain occupies 319–495 (PPQVLLDYYA…FLSGECMCDV (177 aa)). The GOLD domain maps to 521 to 674 (TETIYQSASV…KCKVMYYTEV (154 aa)). Phosphoserine is present on S586.

Interacts with RIGI (via tandem CARD domain); the interaction is direct. Interacts (via GOLD domain) with SLC18A3; the interaction is direct. Interacts with SLC5A7 (via GOLD domain); the interaction is direct.

It localises to the cytoplasm. It is found in the golgi apparatus. In terms of biological role, may play a role in innate immunity by inhibiting the antiviral RIG-I signaling pathway. In this pathway, functions as a negative regulator of RIGI, the cytoplasmic sensor of viral nucleic acids. Prevents the interaction of RIGI with MAVS/IPS1, an important step in signal propagation. May also regulate the SLC18A3 and SLC5A7 cholinergic transporters. This is SEC14-like protein 1 from Mus musculus (Mouse).